The sequence spans 309 residues: Tumor necrosis factor ligand superfamily member 13B (309 aa).

At 1-47 the chain is on the cytoplasmic side; that stretch reads MDESAKTLPPPCLCFCSEKGEDMKVGYDPITPQKEEGAWFGICRDGR. A helical; Signal-anchor for type II membrane protein transmembrane segment spans residues 48 to 68; the sequence is LLAATLLLALLSSSFTAMSLY. Over 69–309 the chain is Extracellular; sequence QLAALQADLM…DTFFGALKLL (241 aa). Residues 110–140 form a disordered region; it reads PAAPRPHNSSRGHRNRRAFQGPEETEQDVDL. N-linked (GlcNAc...) asparagine glycans are attached at residues Asn-117 and Asn-266. The span at 117-126 shows a compositional bias: basic residues; the sequence is NSSRGHRNRR. One can recognise a THD domain in the interval 169–308; the sequence is DCLQLIADSD…DDTFFGALKL (140 aa). Cys-256 and Cys-269 form a disulfide bridge.

It belongs to the tumor necrosis factor family. As to quaternary structure, homotrimer. Isoform 2 heteromultimerizes with isoform 1, probably limiting the amount of functional isoform 1 on the cell surface. Post-translationally, the soluble form derives from the membrane form by proteolytic processing. In terms of processing, isoform 2 is not efficiently shed from the membrane unlike isoform 1. Isoform 2 is expressed in many myeloid cell lines.

The protein resides in the cell membrane. The protein localises to the secreted. Cytokine that binds to TNFRSF13B/TACI and TNFRSF17/BCMA. TNFSF13/APRIL binds to the same 2 receptors. Together, they form a 2 ligands -2 receptors pathway involved in the stimulation of B- and T-cell function and the regulation of humoral immunity. A third B-cell specific BAFF-receptor (BAFFR/BR3) promotes the survival of mature B-cells and the B-cell response. Functionally, isoform 2 seems to inhibit isoform 1 secretion and bioactivity. The polypeptide is Tumor necrosis factor ligand superfamily member 13B (Tnfsf13b) (Mus musculus (Mouse)).